Reading from the N-terminus, the 528-residue chain is ATP synthase subunit beta 2 (528 aa).

Positions 1 to 10 are enriched in polar residues; it reads MADPQATNGT. The segment at 1 to 27 is disordered; sequence MADPQATNGTGAACAERDASDVGDARD. The span at 15–27 shows a compositional bias: basic and acidic residues; sequence AERDASDVGDARD. An ATP-binding site is contributed by 179 to 186; that stretch reads GGAGVGKT. Positions 488–499 are enriched in basic and acidic residues; it reads AAAREADARREA. The interval 488–528 is disordered; that stretch reads AAAREADARREAAAAASGAGPGTTSDPASGSAEPQGARHGR.

It belongs to the ATPase alpha/beta chains family. As to quaternary structure, F-type ATPases have 2 components, CF(1) - the catalytic core - and CF(0) - the membrane proton channel. CF(1) has five subunits: alpha(3), beta(3), gamma(1), delta(1), epsilon(1). CF(0) has three main subunits: a(1), b(2) and c(9-12). The alpha and beta chains form an alternating ring which encloses part of the gamma chain. CF(1) is attached to CF(0) by a central stalk formed by the gamma and epsilon chains, while a peripheral stalk is formed by the delta and b chains.

The protein localises to the cell inner membrane. The enzyme catalyses ATP + H2O + 4 H(+)(in) = ADP + phosphate + 5 H(+)(out). In terms of biological role, produces ATP from ADP in the presence of a proton gradient across the membrane. The catalytic sites are hosted primarily by the beta subunits. The chain is ATP synthase subunit beta 2 from Burkholderia pseudomallei (strain 1106a).